Reading from the N-terminus, the 149-residue chain is UPF0260 protein PA1299 (149 aa).

The protein belongs to the UPF0260 family.

The chain is UPF0260 protein PA1299 from Pseudomonas aeruginosa (strain ATCC 15692 / DSM 22644 / CIP 104116 / JCM 14847 / LMG 12228 / 1C / PRS 101 / PAO1).